The chain runs to 162 residues: 2-C-methyl-D-erythritol 2,4-cyclodiphosphate synthase (162 aa).

Positions 10 and 12 each coordinate a divalent metal cation. Residues 10 to 12 and 36 to 37 each bind 4-CDP-2-C-methyl-D-erythritol 2-phosphate; these read DVH and HS. Histidine 44 lines the a divalent metal cation pocket. 4-CDP-2-C-methyl-D-erythritol 2-phosphate contacts are provided by residues 58–60, 63–67, 102–108, 134–137, phenylalanine 141, and arginine 144; these read DIG, FPDTD, AQAPKMA, and TTTE.

It belongs to the IspF family. As to quaternary structure, homotrimer. Requires a divalent metal cation as cofactor.

It catalyses the reaction 4-CDP-2-C-methyl-D-erythritol 2-phosphate = 2-C-methyl-D-erythritol 2,4-cyclic diphosphate + CMP. It functions in the pathway isoprenoid biosynthesis; isopentenyl diphosphate biosynthesis via DXP pathway; isopentenyl diphosphate from 1-deoxy-D-xylulose 5-phosphate: step 4/6. Functionally, involved in the biosynthesis of isopentenyl diphosphate (IPP) and dimethylallyl diphosphate (DMAPP), two major building blocks of isoprenoid compounds. Catalyzes the conversion of 4-diphosphocytidyl-2-C-methyl-D-erythritol 2-phosphate (CDP-ME2P) to 2-C-methyl-D-erythritol 2,4-cyclodiphosphate (ME-CPP) with a corresponding release of cytidine 5-monophosphate (CMP). This is 2-C-methyl-D-erythritol 2,4-cyclodiphosphate synthase from Pseudoalteromonas atlantica (strain T6c / ATCC BAA-1087).